The chain runs to 99 residues: Aspartyl/glutamyl-tRNA(Asn/Gln) amidotransferase subunit C (99 aa).

It belongs to the GatC family. In terms of assembly, heterotrimer of A, B and C subunits.

It carries out the reaction L-glutamyl-tRNA(Gln) + L-glutamine + ATP + H2O = L-glutaminyl-tRNA(Gln) + L-glutamate + ADP + phosphate + H(+). The enzyme catalyses L-aspartyl-tRNA(Asn) + L-glutamine + ATP + H2O = L-asparaginyl-tRNA(Asn) + L-glutamate + ADP + phosphate + 2 H(+). Its function is as follows. Allows the formation of correctly charged Asn-tRNA(Asn) or Gln-tRNA(Gln) through the transamidation of misacylated Asp-tRNA(Asn) or Glu-tRNA(Gln) in organisms which lack either or both of asparaginyl-tRNA or glutaminyl-tRNA synthetases. The reaction takes place in the presence of glutamine and ATP through an activated phospho-Asp-tRNA(Asn) or phospho-Glu-tRNA(Gln). This chain is Aspartyl/glutamyl-tRNA(Asn/Gln) amidotransferase subunit C, found in Burkholderia thailandensis (strain ATCC 700388 / DSM 13276 / CCUG 48851 / CIP 106301 / E264).